The primary structure comprises 88 residues: Defensin-like protein 98 (88 aa).

The signal sequence occupies residues Met1–Gly29. Intrachain disulfides connect Cys33–Cys76, Cys40–Cys62, Cys46–Cys73, and Cys50–Cys75.

Belongs to the DEFL family.

The protein localises to the secreted. This chain is Defensin-like protein 98, found in Arabidopsis thaliana (Mouse-ear cress).